Consider the following 295-residue polypeptide: UDP-N-acetylenolpyruvoylglucosamine reductase (295 aa).

In terms of domain architecture, FAD-binding PCMH-type spans 24-188 (KVGGNAEIFF…LKVIFKINKG (165 aa)). Residue R168 is part of the active site. The Proton donor role is filled by S217. The active site involves E287.

It belongs to the MurB family. FAD serves as cofactor.

The protein resides in the cytoplasm. It carries out the reaction UDP-N-acetyl-alpha-D-muramate + NADP(+) = UDP-N-acetyl-3-O-(1-carboxyvinyl)-alpha-D-glucosamine + NADPH + H(+). It participates in cell wall biogenesis; peptidoglycan biosynthesis. Cell wall formation. The protein is UDP-N-acetylenolpyruvoylglucosamine reductase of Rickettsia rickettsii (strain Iowa).